The following is a 446-amino-acid chain: MSTSSSSSDNGAGGSGGVFEAPSPSRPRRGANDVWPEPFLESLAVQVAVNASTSAGLLAAAPALANVFRVCTTWHAVSRSDHLWQLLSRQVWARTHLMHDTWRDEFIYRHRTARNFRTRTHTYFTLQFDPSDVDEPDSLSCRCLTLSDLYLAAGFADGTVRLFLLNNRLHVRTLRPPLRDRFGRFSRAVSGIVISDSRLTFATMDGDIHVAEIDGVGHTRTAYAGDIVNDGALVDFTGCGRWWVGLFAGVPGRAFHIWDCNSEETTFVGGTLTDPEAVMGWHTLTELTTSLGRLRISGNETAVACTRWRIMVIDLRNQGVIIGEDEEQRRGLIVTGFDANDEAYVRLDSRGNASVRRVNTQQTVCEFRVSGAAQRRVMGCVNRLHALMCAGGIMRVWEVERGEYLYSIRERVGEVDAIVADDRHVAVASASSTAQSIIHLWDFGAL.

A compositionally biased stretch (low complexity) spans 1–10 (MSTSSSSSDN). A disordered region spans residues 1 to 32 (MSTSSSSSDNGAGGSGGVFEAPSPSRPRRGAN).

Expressed in inflorescence and floral meristems, young floral organ primordia, and later in ovule primordia.

The protein resides in the nucleus. Functionally, transcriptional regulator involved in the specification of floral identity. Acts as A class cadastral protein by repressing the C class floral homeotic gene AGAMOUS in the external flower organs in association with APETALA2 and other repressors. Is required to maintain floral meristem identity in concert with AGAMOUS. Also interacts with APETALA2 to ensure the normal development of ovule. This Arabidopsis thaliana (Mouse-ear cress) protein is Transcriptional regulator STERILE APETALA (SAP).